A 690-amino-acid polypeptide reads, in one-letter code: Guanylate cyclase soluble subunit alpha-1 (690 aa).

Ser-267 carries the post-translational modification Phosphoserine. The Guanylate cyclase domain maps to 481 to 608 (TMLFSDIVGF…NNVTLANKFE (128 aa)).

This sequence belongs to the adenylyl cyclase class-4/guanylyl cyclase family. The active enzyme is formed by a heterodimer of an alpha and a beta subunit. Heterodimer with GUCY1B1. Mg(2+) is required as a cofactor. It depends on Mn(2+) as a cofactor.

The protein resides in the cytoplasm. The enzyme catalyses GTP = 3',5'-cyclic GMP + diphosphate. Its activity is regulated as follows. Activated by nitric oxide in the presence of magnesium or manganese ions. The sequence is that of Guanylate cyclase soluble subunit alpha-1 (GUCY1A1) from Canis lupus familiaris (Dog).